The following is a 290-amino-acid chain: GTPase Era (290 aa).

The region spanning 2 to 169 is the Era-type G domain; sequence KSGFVSIIGR…KDKIYANLQE (168 aa). The interval 10–17 is G1; that stretch reads GRPSTGKS. 10–17 contributes to the GTP binding site; the sequence is GRPSTGKS. The G2 stretch occupies residues 36-40; that stretch reads QTTRN. The G3 stretch occupies residues 57-60; sequence DTPG. Residues 57–61 and 119–122 each bind GTP; these read DTPGF and NKID. The tract at residues 119 to 122 is G4; it reads NKID. Residues 148-150 form a G5 region; the sequence is ISA. Positions 200–276 constitute a KH type-2 domain; that stretch reads LKEELPYSLY…DLFLQVKLRK (77 aa).

It belongs to the TRAFAC class TrmE-Era-EngA-EngB-Septin-like GTPase superfamily. Era GTPase family. As to quaternary structure, monomer.

The protein localises to the cytoplasm. Its subcellular location is the cell inner membrane. Functionally, an essential GTPase that binds both GDP and GTP, with rapid nucleotide exchange. Plays a role in 16S rRNA processing and 30S ribosomal subunit biogenesis and possibly also in cell cycle regulation and energy metabolism. This chain is GTPase Era, found in Borrelia hermsii (strain HS1 / DAH).